The primary structure comprises 141 residues: Large ribosomal subunit protein bL17 (141 aa).

Residues 120–141 (TSAKGQDSGPVLTADEDEFEAA) form a disordered region.

Belongs to the bacterial ribosomal protein bL17 family. As to quaternary structure, part of the 50S ribosomal subunit. Contacts protein L32.

The sequence is that of Large ribosomal subunit protein bL17 from Novosphingobium aromaticivorans (strain ATCC 700278 / DSM 12444 / CCUG 56034 / CIP 105152 / NBRC 16084 / F199).